The sequence spans 49 residues: Small, acid-soluble spore protein O (49 aa).

The interval 1–49 (MGKRKANHTISGMNAASAQGQGTGYNEEFANEPFTPAERQNNKKRKKNQ) is disordered. The segment covering 8–20 (HTISGMNAASAQG) has biased composition (polar residues).

The protein belongs to the SspO family.

It is found in the spore core. This is Small, acid-soluble spore protein O from Bacillus cereus (strain ATCC 14579 / DSM 31 / CCUG 7414 / JCM 2152 / NBRC 15305 / NCIMB 9373 / NCTC 2599 / NRRL B-3711).